The following is a 382-amino-acid chain: tRNA-queuosine alpha-mannosyltransferase (382 aa).

This sequence belongs to the glycosyltransferase group 1 family. Glycosyltransferase 4 subfamily.

Its subcellular location is the cytoplasm. The protein resides in the nucleus. The catalysed reaction is queuosine(34) in tRNA(Asp) + GDP-alpha-D-mannose = O-4''-alpha-D-mannosylqueuosine(34) in tRNA(Asp) + GDP + H(+). Glycosyltransferase that specifically catalyzes mannosylation of cytoplasmic tRNA(Asp) modified with queuosine at position 34 (queuosine(34)). Mannosylates the cyclopentene moiety of queuosine(34) in tRNA(Asp) to form mannosyl-queuosine(34). Mannosylation of queuosine(34) in tRNA(Asp) is required to slow-down elongation at cognate codons, GAC and GAU, thereby regulating protein translation. The chain is tRNA-queuosine alpha-mannosyltransferase (GTDC1) from Gallus gallus (Chicken).